We begin with the raw amino-acid sequence, 65 residues long: uncharacterized protein (65 aa).

The first 22 residues, 1 to 22 (MKFIKLFTFLVYLFVTLTNVFA), serve as a signal peptide directing secretion.

This is an uncharacterized protein from Invertebrate iridescent virus 6 (IIV-6).